A 380-amino-acid polypeptide reads, in one-letter code: uncharacterized protein (380 aa).

An N-terminal signal peptide occupies residues 1–18; it reads MALRHLALLAGLLVGVAS. Residues Asn-104, Asn-111, and Asn-128 are each glycosylated (N-linked (GlcNAc...) asparagine). A helical membrane pass occupies residues 148 to 168; sequence LFLGTFFISSGLILSVAGFFY. Disordered stretches follow at residues 229–256 and 336–380; these read PQTG…QGQG and RFSG…ISNV. Over residues 240-249 the composition is skewed to pro residues; the sequence is PPLPGSPGDP. The span at 356–366 shows a compositional bias: basic and acidic residues; it reads VRRERPLDRAT.

The protein localises to the membrane. This is an uncharacterized protein from Homo sapiens (Human).